An 89-amino-acid polypeptide reads, in one-letter code: C-C motif chemokine 18 (89 aa).

The N-terminal stretch at 1-20 is a signal peptide; sequence MKGLAAALLVLVCTMALCSC. 2 disulfides stabilise this stretch: Cys-30–Cys-54 and Cys-31–Cys-70.

This sequence belongs to the intercrine beta (chemokine CC) family. The Cys-30/Cys-54 disulfide bond is required for activity. In terms of tissue distribution, expressed at high levels in lung, lymph nodes, placenta, bone marrow, dendritic cells present in germinal centers and T-cell areas of secondary lymphoid organs and macrophages derived from peripheral blood monocytes. Not expressed by peripheral blood monocytes and a monocyte-to-macrophage differentiation is a prerequisite for expression. Expressed in synovial fluids from patients with rheumatoid and septic arthritis and in ovarian carcinoma ascitic fluid.

It localises to the secreted. Functionally, chemotactic factor that attracts lymphocytes but not monocytes or granulocytes. May be involved in B-cell migration into B-cell follicles in lymph nodes. Attracts naive T-lymphocytes toward dendritic cells and activated macrophages in lymph nodes, has chemotactic activity for naive T-cells, CD4+ and CD8+ T-cells and thus may play a role in both humoral and cell-mediated immunity responses. In Homo sapiens (Human), this protein is C-C motif chemokine 18 (CCL18).